We begin with the raw amino-acid sequence, 147 residues long: Antiholin-like protein LrgA (147 aa).

4 helical membrane passes run 12–32, 35–55, 74–94, and 98–118; these read PAHFFHQVIVIALVLFVSKII, FMPIPMPGSVIGLVLLFVLLC, NIGLLFVPAGISVVNSLGVIS, and FLIIGLIIVSTILLLICTGYV.

This sequence belongs to the CidA/LrgA family. LrgA subfamily.

The protein resides in the cell membrane. Inhibits the expression or activity of extracellular murein hydrolases by interacting, possibly with LrgB, with the holin-like proteins CidA and/or CidB. The LrgAB and CidAB proteins may affect the proton motive force of the membrane. May be involved in programmed cell death (PCD), possibly triggering PCD in response to antibiotics and environmental stresses. This Staphylococcus aureus (strain MSSA476) protein is Antiholin-like protein LrgA.